Consider the following 410-residue polypeptide: E3 SUMO-protein ligase EGR2 (410 aa).

A compositionally biased stretch (low complexity) spans 68-83 (PPASTTASSSVTSASP). Disordered stretches follow at residues 68-95 (PPAS…GVCT), 101-120 (PELD…SGCT), and 127-151 (PSAF…SYPS). Residues 104 to 107 (DHLY) carry the HCFC1-binding-motif (HBM) motif. A compositionally biased stretch (low complexity) spans 127 to 143 (PSAFLSPPTTSTSSLAY). K188 carries the post-translational modification N6-acetyllysine. A disordered region spans residues 217–286 (PSAGVTGPGA…PYPCPAEGCD (70 aa)). Over residues 222-231 (TGPGASGGSE) the composition is skewed to gly residues. Over residues 237–248 (GSGSAAVTTSPY) the composition is skewed to polar residues. C2H2-type zinc fingers lie at residues 278–302 (YPCP…IRIH), 308–330 (FQCR…IRTH), and 336–358 (FACD…TKIH). The disordered stretch occupies residues 349–410 (DERKRHTKIH…LACTSRTRTP (62 aa)). A compositionally biased stretch (basic residues) spans 353 to 363 (RHTKIHLRQKE). The segment covering 367-380 (SAPSSSASAQPSAS) has biased composition (low complexity).

The protein belongs to the EGR C2H2-type zinc-finger protein family. As to quaternary structure, interacts with HCFC1. Interacts with WWP2. Interacts with UBC9. Interacts with CITED1. Interacts (via phosphorylated form) with SFN. In terms of processing, ubiquitinated by WWP2 leading to proteasomal degradation. Post-translationally, acetylated. May be deacetylated by HDAC6, HDAC10 or SIRT1.

Its subcellular location is the nucleus. It participates in protein modification; protein sumoylation. Sequence-specific DNA-binding transcription factor. Plays a role in hindbrain segmentation by regulating the expression of a subset of homeobox containing genes and in Schwann cell myelination by regulating the expression of genes involved in the formation and maintenance of myelin. Binds to two EGR2-consensus sites EGR2A (5'-CTGTAGGAG-3') and EGR2B (5'-ATGTAGGTG-3') in the HOXB3 enhancer and promotes HOXB3 transcriptional activation. Binds to specific DNA sites located in the promoter region of HOXA4, HOXB2 and ERBB2. Regulates hindbrain segmentation by controlling the expression of Hox genes, such as HOXA4, HOXB3 and HOXB2, and thereby specifying odd and even rhombomeres. Promotes the expression of HOXB3 in the rhombomere r5 in the hindbrain. Regulates myelination in the peripheral nervous system after birth, possibly by regulating the expression of myelin proteins, such as MPZ, and by promoting the differentiation of Schwann cells. Involved in the development of the jaw openener musculature, probably by playing a role in its innervation through trigeminal motor neurons. May play a role in adipogenesis, possibly by regulating the expression of CEBPB. In terms of biological role, E3 SUMO-protein ligase helping SUMO1 conjugation to its coregulators NAB1 and NAB2, whose sumoylation down-regulates EGR2 transcriptional activity. The chain is E3 SUMO-protein ligase EGR2 (EGR2) from Cricetulus griseus (Chinese hamster).